The chain runs to 230 residues: Capsid protein (230 aa).

The span at 19–48 (PPTSDAASPSADQPAVSSSRSDSRLVSAPL) shows a compositional bias: low complexity. The interval 19-54 (PPTSDAASPSADQPAVSSSRSDSRLVSAPLPAAPPA) is disordered.

It belongs to the tymoviruses capsid protein family.

It is found in the virion. Self-assembles to form a T=3 icosahedral capsid composed of 180 copies of the capsid protein. The capsid encapsulates the single-stranded RNA genome. The sequence is that of Capsid protein from Grapevine fleck virus (isolate Italy/MT48) (GFkV).